Here is a 171-residue protein sequence, read N- to C-terminus: Replication restart protein PriC (171 aa).

This sequence belongs to the PriC family. Monomer. Component of the replication restart primosome, which is composed of PriA, PriB, PriC, DnaBe and DnaT; DnaG primase associates transiently with this complex. Interacts with the C-terminus of SSB. SSB interaction is required to load the main replicative helicase onto substrate replication forks. Interacts with helicase DnaB alone and in the DnaB-DnaC complex, probably 1:1 binding with DnaB.

In terms of biological role, involved in the restart of stalled replication forks, which reloads the DnaB replicative helicase on sites other than the origin of replication. In vitro can load (E.coli) DnaB replicative helicase from a DnaB-DnaC complex on a single-stranded DNA (ssDNA)-binding protein (SSB)-coated stalled replication fork with no leading- or lagging-strand in the absence of other primosome proteins (PriA, PriB or DnaT). Binds SSB (tested with E.coli protein) and ssDNA. Complements priC in an E.coli priB-priC double deletion. In Cronobacter sakazakii (strain ATCC BAA-894) (Enterobacter sakazakii), this protein is Replication restart protein PriC.